The chain runs to 504 residues: Heat shock 70 kDa protein 14 (504 aa).

It belongs to the heat shock protein 70 family. As to quaternary structure, component of ribosome-associated complex (RAC).

It is found in the cytoplasm. The protein localises to the cytosol. Component of the ribosome-associated complex (RAC), a complex involved in folding or maintaining nascent polypeptides in a folding-competent state. The chain is Heat shock 70 kDa protein 14 (hspa14) from Danio rerio (Zebrafish).